We begin with the raw amino-acid sequence, 1881 residues long: Ankyrin-1 (1881 aa).

Residues 1–827 (MPYSVGFREA…EDEGEELISF (827 aa)) are 89 kDa domain. ANK repeat units follow at residues 44 to 73 (NGLN…ILET), 77 to 106 (KGNT…NVNA), 110 to 139 (KGFT…NQNV), 143 to 172 (DGFT…KGKV), 174 to 201 (LPAL…NPDV), 205 to 234 (TGFT…SVNF), 238 to 267 (NGIT…QIET), 271 to 300 (DELT…PIQA), 304 to 333 (NGLS…EIDD), 337 to 366 (DHLT…KPNS), 370 to 399 (NGFT…SIDA), 403 to 432 (SGLT…SPNV), 436 to 465 (KVET…KVNA), 469 to 498 (DDQT…NPNL), 502 to 531 (AGHT…SQAC), 535 to 564 (KGFT…HPNA), 568 to 597 (NGLT…SPHS), 601 to 630 (NGYT…SANA), 634 to 663 (QGVT…NGNL), 667 to 696 (SGLT…MVDA), 700 to 729 (MGYT…DVNA), 733 to 762 (LGYS…SPNE), and 766 to 795 (DGTT…ETSF). The residue at position 105 (Asn105) is a (3S)-3-hydroxyasparagine; by HIF1AN; partial. Position 233 is a (3S)-3-hydroxyasparagine; by HIF1AN; partial (Asn233). Ser429 carries the post-translational modification Phosphoserine. Asn431 and Asn464 each carry (3S)-3-hydroxyasparagine; by HIF1AN; partial. (3S)-3-hydroxyasparagine; by HIF1AN; partial is present on residues Asn629 and Asn662. A (3S)-3-hydroxyaspartate; by HIF1AN; partial modification is found at Asp695. Residue Asn728 is modified to (3S)-3-hydroxyasparagine; by HIF1AN; partial. Ser759 carries the post-translational modification Phosphoserine. Asn761 carries the post-translational modification (3S)-3-hydroxyasparagine; by HIF1AN; partial. Residues Ser781, Ser817, Ser834, and Ser856 each carry the phosphoserine modification. Residues 875–904 (EEQEQASKEYDEDSLIPSSPATETSDNISP) form a disordered region. Residues 890-904 (IPSSPATETSDNISP) show a composition bias toward polar residues. 2 ZU5 domains span residues 913–1068 (FLVS…IMSR) and 1070–1216 (CQDY…LSDC). At Thr961 the chain carries Phosphothreonine. Tyr1073 is subject to Phosphotyrosine. The residue at position 1082 (Ser1082) is a Phosphoserine. Residues 1234-1362 (TAVPYMAKFV…QHILCHLNIT (129 aa)) form a UPA domain region. 2 positions are modified to phosphothreonine: Thr1378 and Thr1380. The segment at 1383–1881 (ALRYSILSES…SKDHTSTPNP (499 aa)) is 55 kDa regulatory domain. Residues Ser1390, Ser1392, and Ser1396 each carry the phosphoserine modification. Thr1400 carries the post-translational modification Phosphothreonine. The Death domain occupies 1403-1487 (AEMKMAVISE…EIVNMLEGSG (85 aa)). A phosphoserine mark is found at Ser1428 and Ser1486. The tract at residues 1486–1510 (SGRQSRNLKPDRRHTDRDYSLSPSQ) is disordered. A compositionally biased stretch (basic and acidic residues) spans 1493–1504 (LKPDRRHTDRDY). Ser1523 and Ser1533 each carry phosphoserine. Residues 1583–1613 (SSLECSKAEDSDATGHEWKLEGALSEEPRGP) are disordered. Residues 1588–1612 (SKAEDSDATGHEWKLEGALSEEPRG) show a composition bias toward basic and acidic residues. A Phosphoserine modification is found at Ser1617. Disordered regions lie at residues 1637–1703 (LLEQ…LQDW), 1718–1791 (QGSW…EAKN), and 1840–1859 (ADAA…EDPS). Residues 1642–1658 (EGQRSEEKLPGSKRQDD) show a composition bias toward basic and acidic residues. 5 positions are modified to phosphoserine: Ser1666, Ser1671, Ser1686, Ser1690, and Ser1696. Residues 1683 to 1694 (ITHSPTVSQVTE) are compositionally biased toward polar residues. Polar residues-rich tracts occupy residues 1718-1739 (QGSW…STMT) and 1758-1771 (SEHT…AESS). Basic and acidic residues predominate over residues 1772–1781 (QADRDRRQQG).

Component of the ankyrin-1 complex in the erythrocyte, composed of ANK1, RHCE, RHAG, SLC4A1, EPB42, GYPA, GYPB and AQP1. Interacts with a number of integral membrane proteins and cytoskeletal proteins. Interacts (via N-terminus) with SPTB/spectrin (beta chain). Also interacts with TTN/titin. Isoform Mu17 interacts with OBSCN isoform 3/obscurin. Interacts with HIF1AN. Interacts (via ANK 1-5 repeats) with RHCE; this interaction mediates the primary membrane attachment site for ANK1. Interacts (via ANK 1-2 repeats) with AQP1 (via the N-terminal). Interacts (via ANK 1-13 repeats) with EPB42. Interacts directly with SLC4A1 (via the cytoplasmic domain); this interaction is mediated by the SLC4A1 Band 3-II and Band 3-III dimers. Post-translationally, regulated by phosphorylation. In terms of processing, palmitoylated. Hydroxylated by HIF1AN at several asparagine and 1 aspartate residue within ANK repeat region. Hydroxylation seems to increase the conformational stability of this region and may also modulate protein-protein interactions mediated by the ANK repeat region. Post-translationally, (Microbial infection) Probably cleaved by P.falciparum SERA6; the cleavage probably causes the disruption of the actin cytoskeleton and the rupture of the erythrocyte cell membrane releasing the merozoites. In terms of tissue distribution, isoform Mu17, isoform Mu18, isoform Mu19 and isoform Mu20 are expressed in skeletal muscle. Isoform Br21 is expressed in brain.

It localises to the cytoplasm. The protein localises to the cytoskeleton. It is found in the membrane. Its subcellular location is the myofibril. The protein resides in the sarcomere. It localises to the m line. The protein localises to the sarcoplasmic reticulum. Functionally, component of the ankyrin-1 complex, a multiprotein complex involved in the stability and shape of the erythrocyte membrane. Attaches integral membrane proteins to cytoskeletal elements; binds to the erythrocyte membrane protein band 4.2, to Na-K ATPase, to the lymphocyte membrane protein GP85, and to the cytoskeletal proteins fodrin, tubulin, vimentin and desmin. Erythrocyte ankyrins also link spectrin (beta chain) to the cytoplasmic domain of the erythrocytes anion exchange protein; they retain most or all of these binding functions. Its function is as follows. Together with obscurin in skeletal muscle may provide a molecular link between the sarcoplasmic reticulum and myofibrils. This chain is Ankyrin-1, found in Homo sapiens (Human).